The primary structure comprises 58 residues: uncharacterized protein (58 aa).

It to A.fulgidus AF2407.1.

This is an uncharacterized protein from Pyrococcus abyssi (strain GE5 / Orsay).